The chain runs to 421 residues: Probable sugar-binding periplasmic protein (421 aa).

Residues 1 to 27 (MHKLLKLAAMGTAACALLAGMAPVANA) form the signal peptide.

The protein belongs to the bacterial solute-binding protein 1 family.

It is found in the periplasm. Part of a binding-protein-dependent transport system for a sugar. This Brucella suis biovar 1 (strain 1330) protein is Probable sugar-binding periplasmic protein.